We begin with the raw amino-acid sequence, 1366 residues long: ABC multidrug transporter MDR2 (1366 aa).

Residues 52-72 form a helical membrane-spanning segment; sequence IALIVIGTIAGIGAGIPFPLL. The region spanning 56-354 is the ABC transmembrane type-1 1 domain; the sequence is VIGTIAGIGA…MAPFMHIFAS (299 aa). N84 carries an N-linked (GlcNAc...) asparagine glycan. Helical transmembrane passes span 106 to 126, 180 to 200, 202 to 222, 288 to 308, and 323 to 343; these read VLQV…HTGC, KVGL…VAFL, VATI…MAFG, IQFG…FWQG, and VSVG…FVLS. In terms of domain architecture, ABC transporter 1 spans 390-669; the sequence is IELQDVTFNY…DGVYAGMVRL (280 aa). 425–432 serves as a coordination point for ATP; it reads GTSGSGKS. A glycan (N-linked (GlcNAc...) asparagine) is linked at N620. The tract at residues 727–746 is disordered; the sequence is PEEADSLPTEPEAKKEKPKQ. Transmembrane regions (helical) follow at residues 768-788, 807-827, 868-888, and 898-918; these read LGLI…VIFG, GMLF…AVIV, LLVA…GTTI, and LFAG…VLLA. An ABC transmembrane type-1 2 domain is found at 768 to 1055; that stretch reads LGLITSIMIG…MFALVPDISK (288 aa). Residue N976 is glycosylated (N-linked (GlcNAc...) asparagine). 2 helical membrane-spanning segments follow: residues 995–1015 and 1019–1039; these read FWLS…YWWG and ILAG…LLFS. Positions 1122 to 1361 constitute an ABC transporter 2 domain; that stretch reads VQFRNVHFRY…CESYRANVIH (240 aa). Position 1157-1164 (1157-1164) interacts with ATP; the sequence is GPSGSGKS.

It belongs to the ABC transporter superfamily. ABCB family. Multidrug resistance exporter (TC 3.A.1.201) subfamily.

The protein localises to the cell membrane. Pleiotropic ABC efflux transporter that may be involved in the modulation susceptibility to a wide range of unrelated cytotoxic compounds. Does not act as an efflux pump for azoles, including fluconazole, itraconazole, ketoconazole, miconazole and voriconazole, nor does it modulate susceptibility to cycloheximide. The sequence is that of ABC multidrug transporter MDR2 from Trichophyton rubrum (strain ATCC MYA-4607 / CBS 118892) (Athlete's foot fungus).